The primary structure comprises 551 residues: Arginine--tRNA ligase (551 aa).

Residues alanine 123 to arginine 133 carry the 'HIGH' region motif.

It belongs to the class-I aminoacyl-tRNA synthetase family. Monomer.

Its subcellular location is the cytoplasm. The catalysed reaction is tRNA(Arg) + L-arginine + ATP = L-arginyl-tRNA(Arg) + AMP + diphosphate. This Chlorobium phaeobacteroides (strain DSM 266 / SMG 266 / 2430) protein is Arginine--tRNA ligase.